We begin with the raw amino-acid sequence, 716 residues long: Phenylalanine/tyrosine ammonia-lyase (716 aa).

The active-site Proton donor/acceptor is the Tyr110. The 5-imidazolinone (Ala-Gly) cross-link spans 211–213 (ASG). A 2,3-didehydroalanine (Ser) modification is found at Ser212. Residues Asn270, Gln360, Arg366, Asn397, Lys468, Glu496, and Asn499 each coordinate (E)-cinnamate.

This sequence belongs to the PAL/histidase family. As to quaternary structure, homotetramer. Dimer of dimers. In terms of processing, contains an active site 4-methylidene-imidazol-5-one (MIO), which is formed autocatalytically by cyclization and dehydration of residues Ala-Ser-Gly.

Its subcellular location is the cytoplasm. It carries out the reaction L-phenylalanine = (E)-cinnamate + NH4(+). It catalyses the reaction L-tyrosine = (E)-4-coumarate + NH4(+). The protein operates within phenylpropanoid metabolism; trans-cinnamate biosynthesis; trans-cinnamate from L-phenylalanine: step 1/1. Functionally, catalyzes the non-oxidative deamination of L-phenylalanine and L-tyrosine to form trans-cinnamic acid and p-coumaric acid respectively with similar efficiencies. Facilitates the commitment step in phenylpropanoid pathways that produce secondary metabolites such as lignins, coumarins and flavonoids. The sequence is that of Phenylalanine/tyrosine ammonia-lyase (PAL) from Rhodotorula toruloides (Yeast).